A 486-amino-acid chain; its full sequence is N-succinylglutamate 5-semialdehyde dehydrogenase (486 aa).

220 to 225 is a binding site for NAD(+); that stretch reads GSSRTG. Catalysis depends on residues Glu-243 and Cys-277.

Belongs to the aldehyde dehydrogenase family. AstD subfamily.

It carries out the reaction N-succinyl-L-glutamate 5-semialdehyde + NAD(+) + H2O = N-succinyl-L-glutamate + NADH + 2 H(+). The protein operates within amino-acid degradation; L-arginine degradation via AST pathway; L-glutamate and succinate from L-arginine: step 4/5. Its function is as follows. Catalyzes the NAD-dependent reduction of succinylglutamate semialdehyde into succinylglutamate. This Shewanella putrefaciens (strain CN-32 / ATCC BAA-453) protein is N-succinylglutamate 5-semialdehyde dehydrogenase.